Reading from the N-terminus, the 89-residue chain is MKVLFTLAMIVVTLCLGQRMRRDIIDDVCNTCEMSCQWVIANNGTTVCRIPECDTIAAFCKSLKFNMSECMEDDSFIQDHCIRAFLLAD.

The first 22 residues, 1–22 (MKVLFTLAMIVVTLCLGQRMRR), serve as a signal peptide directing secretion.

It belongs to the teretoxin C (TC) superfamily. In terms of processing, contains 4 disulfide bonds. Expressed by the venom duct.

The protein localises to the secreted. This chain is Teretoxin Tan22.12, found in Terebra anilis (Auger snail).